The primary structure comprises 352 residues: Phenylalanine--tRNA ligase alpha subunit (352 aa).

E258 provides a ligand contact to Mg(2+).

Belongs to the class-II aminoacyl-tRNA synthetase family. Phe-tRNA synthetase alpha subunit type 1 subfamily. In terms of assembly, tetramer of two alpha and two beta subunits. It depends on Mg(2+) as a cofactor.

It localises to the cytoplasm. The catalysed reaction is tRNA(Phe) + L-phenylalanine + ATP = L-phenylalanyl-tRNA(Phe) + AMP + diphosphate + H(+). The polypeptide is Phenylalanine--tRNA ligase alpha subunit (Staphylococcus aureus (strain Mu3 / ATCC 700698)).